A 506-amino-acid chain; its full sequence is U3 small nucleolar RNA-associated protein 18 homolog (506 aa).

Residues 1–11 are compositionally biased toward acidic residues; that stretch reads MSSDESSDGLE. 2 disordered regions span residues 1–44 and 69–126; these read MSSD…SQAK and AKSV…PLNH. A compositionally biased stretch (basic and acidic residues) spans 24 to 37; sequence EQEKPAKIKRERYI. A phosphoserine mark is found at Ser102, Ser104, Ser164, and Ser165. WD repeat units lie at residues 203–242, 331–370, 372–413, and 469–505; these read YAEG…NERL, KQEG…IEHI, MDDG…ASKA, and EKVG…YFKG.

The protein belongs to the WD repeat UTP18 family. Component of U3 snoRNP complex.

It is found in the nucleus. The protein localises to the nucleolus. In terms of biological role, component of a nucleolar small nuclear ribonucleoprotein particle (snoRNP) thought to participate in the processing and modification of pre-ribosomal RNA. Regulation of cell size by ribosome synthesis is an important parameter for stem cell maintenance and function. The chain is U3 small nucleolar RNA-associated protein 18 homolog (wcd) from Drosophila melanogaster (Fruit fly).